We begin with the raw amino-acid sequence, 436 residues long: Nicotinate phosphoribosyltransferase (436 aa).

Residue His-231 is modified to Phosphohistidine; by autocatalysis.

It belongs to the NAPRTase family. In terms of processing, transiently phosphorylated on a His residue during the reaction cycle. Phosphorylation strongly increases the affinity for substrates and increases the rate of nicotinate D-ribonucleotide production. Dephosphorylation regenerates the low-affinity form of the enzyme, leading to product release.

The enzyme catalyses nicotinate + 5-phospho-alpha-D-ribose 1-diphosphate + ATP + H2O = nicotinate beta-D-ribonucleotide + ADP + phosphate + diphosphate. It participates in cofactor biosynthesis; NAD(+) biosynthesis; nicotinate D-ribonucleotide from nicotinate: step 1/1. Catalyzes the synthesis of beta-nicotinate D-ribonucleotide from nicotinate and 5-phospho-D-ribose 1-phosphate at the expense of ATP. The chain is Nicotinate phosphoribosyltransferase from Vibrio parahaemolyticus serotype O3:K6 (strain RIMD 2210633).